Reading from the N-terminus, the 183-residue chain is Probable calcium-binding protein CML47 (183 aa).

EF-hand domains follow at residues 112 to 147 and 149 to 183; these read MGKEIVKEAFRLFDENQDGFIDENELKHVLSLLGYD and CTKMECRKMVKVYDENRDGKIDFYEFVKLIEKSFS. Ca(2+) is bound by residues Asp125, Asn127, Asp129, Glu136, Asp162, Asn164, Asp166, Lys168, and Glu173.

Functionally, potential calcium sensor. The polypeptide is Probable calcium-binding protein CML47 (CML47) (Arabidopsis thaliana (Mouse-ear cress)).